The sequence spans 368 residues: Probable magnesium transporter (368 aa).

Residues 1–4 are Extracellular-facing; sequence MEDK. A helical transmembrane segment spans residues 5–25; sequence YIGLALAMSSSLAIGTSFIIT. Over 26–50 the chain is Cytoplasmic; it reads KKGLMDASARTGGTDGVQASDYLQN. The helical transmembrane segment at 51 to 71 threads the bilayer; sequence PIWWGGMITMAIGEIANFAAY. Residues 72-76 are Extracellular-facing; that stretch reads TFAPA. The helical transmembrane segment at 77–97 threads the bilayer; it reads ILVTPLGALSVIIGAVLAAIF. At 98 to 101 the chain is on the cytoplasmic side; sequence LKER. A helical membrane pass occupies residues 102-122; that stretch reads LGTLGKMGCAICLMGSVIIIL. Residues 123-143 lie on the Extracellular side of the membrane; that stretch reads HAPPDKEVQTVDEILGYATQP. Residues 144 to 164 form a helical membrane-spanning segment; it reads GFMFYCTVVTLYSLFMIYKIV. The Cytoplasmic portion of the chain corresponds to 165-175; that stretch reads PKYGNTNPMIY. A helical transmembrane segment spans residues 176–196; that stretch reads LSICSSVGSISVMSIKAFGIA. The Extracellular segment spans residues 197-206; the sequence is LKLTLGGNNQ. A helical transmembrane segment spans residues 207–227; that stretch reads FTHVSTYLFLIVVALCIVTQM. Residues 228–240 lie on the Cytoplasmic side of the membrane; sequence NYFNKALDQFDTS. The chain crosses the membrane as a helical span at residues 241–261; it reads IVNPLYYVTFTTFTLAASFIL. Topologically, residues 262–269 are extracellular; the sequence is FKGFNTSS. Residue asparagine 266 is glycosylated (N-linked (GlcNAc...) asparagine). Residues 270-290 form a helical membrane-spanning segment; that stretch reads AVDIISLLIGFLIIFSGVYLL. The Cytoplasmic segment spans residues 291-368; sequence NISRSESPMV…GDEDTRNYRH (78 aa).

Belongs to the NIPA family.

It localises to the cell membrane. Its subcellular location is the early endosome. It catalyses the reaction Mg(2+)(in) = Mg(2+)(out). Its function is as follows. Probably acts as a selective Mg(2+) transporter. Plays a role in cell wall integrity and in engulfment by host macrophages. This is Probable magnesium transporter from Candida albicans (strain SC5314 / ATCC MYA-2876) (Yeast).